Consider the following 207-residue polypeptide: LexA repressor (207 aa).

The H-T-H motif DNA-binding region spans V28–A48. Catalysis depends on for autocatalytic cleavage activity residues S129 and K167.

It belongs to the peptidase S24 family. Homodimer.

The enzyme catalyses Hydrolysis of Ala-|-Gly bond in repressor LexA.. Represses a number of genes involved in the response to DNA damage (SOS response), including recA and lexA. In the presence of single-stranded DNA, RecA interacts with LexA causing an autocatalytic cleavage which disrupts the DNA-binding part of LexA, leading to derepression of the SOS regulon and eventually DNA repair. This chain is LexA repressor, found in Brevibacillus brevis (strain 47 / JCM 6285 / NBRC 100599).